Consider the following 73-residue polypeptide: Antimicrobial peptide 143 (73 aa).

A signal peptide spans 1–22; it reads MKVKCLLAVFLIVLIAAEHCQA. At Lys-38 the chain carries Lysine amide. A propeptide spanning residues 44-73 is cleaved from the precursor; it reads ELGTQFRPQQKNFMRREIDLERLFAEMPDY.

This sequence belongs to the non-disulfide-bridged peptide (NDBP) superfamily. Short antimicrobial peptide (group 4) family. In terms of tissue distribution, expressed by the venom gland.

It is found in the secreted. Its subcellular location is the target cell membrane. Cationic host defense peptide that have antibacterial activity by breaking membranes. Is more effective on Gram-positive than on Gram-negative bacteria. The protein is Antimicrobial peptide 143 of Lychas mucronatus (Chinese swimming scorpion).